The chain runs to 344 residues: Heat-inducible transcription repressor HrcA (344 aa).

The protein belongs to the HrcA family.

Its function is as follows. Negative regulator of class I heat shock genes (grpE-dnaK-dnaJ and groELS operons). Prevents heat-shock induction of these operons. This chain is Heat-inducible transcription repressor HrcA, found in Streptococcus agalactiae serotype III (strain NEM316).